A 252-amino-acid polypeptide reads, in one-letter code: Probable truncated L-gulonolactone oxidase 7, mitochondrial (252 aa).

A mitochondrion-targeting transit peptide spans 1 to 102 (MKRSMRSHLA…ELNYGVLVRY (102 aa)).

It belongs to the oxygen-dependent FAD-linked oxidoreductase family.

It is found in the mitochondrion. The catalysed reaction is L-gulono-1,4-lactone + O2 = L-ascorbate + H2O2 + H(+). Its pathway is cofactor biosynthesis; L-ascorbate biosynthesis. Functionally, may be involved in the biosynthesis of ascorbic acid. This is Probable truncated L-gulonolactone oxidase 7, mitochondrial from Arabidopsis thaliana (Mouse-ear cress).